The primary structure comprises 420 residues: Transcriptional regulator Myc-B (420 aa).

The short motif at 78-86 is the 9aaTAD element; sequence EMVTEFLGG. Disordered stretches follow at residues 141–181, 203–275, and 319–345; these read ALST…LQDP, ASSP…HHSP, and SNNR…NVLE. Low complexity predominate over residues 143–160; it reads STSQCQSQPPQSPLKSPS. Residues 161–172 show a composition bias toward polar residues; sequence CDGSLNLGGTNR. The segment covering 225-246 has biased composition (acidic residues); it reads ESEDEQEDDDDDEDCDEEEEID. Over residues 249 to 262 the composition is skewed to basic and acidic residues; sequence TVEKRQTASRRMES. Residues 319–329 are compositionally biased toward polar residues; that stretch reads SNNRKCASPRS. The bHLH domain maps to 336 to 388; that stretch reads DKRRTHNVLERQRRNELKLSFFALRDQVPRWRNNEKAPKVVILKKATEYAISM. The interval 395-416 is leucine-zipper; that stretch reads LIRETEQLKYRKEQLKQRLQQL.

Efficient DNA binding requires dimerization with another bHLH protein. Binds DNA as a heterodimer with MAX.

The protein resides in the nucleus. Transcription factor that binds DNA in a non-specific manner, yet also specifically recognizes the core sequence 5'-CAC[GA]TG-3'. Activates the transcription of growth-related genes. This chain is Transcriptional regulator Myc-B (myc-b), found in Xenopus laevis (African clawed frog).